The sequence spans 419 residues: Vascular endothelial growth factor C (419 aa).

The N-terminal stretch at 1–31 (MHLLGFFSVACSLLAAALLPGPREAPAAAAA) is a signal peptide. A propeptide spans 32–111 (FESGLDLSDA…RTEETIKFAA (80 aa)) (or 102). Cystine bridges form between Cys131/Cys173, Cys162/Cys209, and Cys166/Cys211. Residues Asn175, Asn205, and Asn240 are each glycosylated (N-linked (GlcNAc...) asparagine). Positions 228-419 (SLPATLPQCQ…PSYWKRPQMS (192 aa)) are excised as a propeptide. 4 repeat units span residues 280–295 (CGPN…QCVC), 304–319 (CGPH…QCVC), 328–343 (CGAN…QCVC), and 347–362 (CPRN…ACEC). Residues 280 to 362 (CGPNKELDEE…LNPGKCACEC (83 aa)) form a 4 X 16 AA repeats of C-X(10)-C-X-C-X(1,3)-C region.

This sequence belongs to the PDGF/VEGF growth factor family. In terms of assembly, homodimer; non-covalent and antiparallel. Interacts with FLT4/VEGFR3; the interaction is required for FLT4/VEGFR3 homodimarization and activation. Post-translationally, undergoes a complex proteolytic maturation which generates a variety of processed secreted forms with increased activity toward VEGFR-3, but only the fully processed form could activate VEGFR-2. VEGF-C first form an antiparallel homodimer linked by disulfide bonds. Before secretion, a cleavage occurs between Arg-227 and Ser-228 producing a heterotetramer. The next extracellular step of the processing removes the N-terminal propeptide. Finally the mature VEGF-C is composed mostly of two VEGF homology domains (VHDs) bound by non-covalent interactions. As to expression, expressed in the spleen. Expressed in the lymph node, thymus, appendix and bone marrow. Expressed in the heart, placenta, skeletal muscle, ovary and small intestine. Expressed in the prostate, testis and colon.

It localises to the secreted. Growth factor active in angiogenesis, and endothelial cell growth, stimulating their proliferation and migration and also has effects on the permeability of blood vessels. May function in angiogenesis of the venous and lymphatic vascular systems during embryogenesis, and also in the maintenance of differentiated lymphatic endothelium in adults. Binds and activates KDR/VEGFR2 and FLT4/VEGFR3 receptors. The sequence is that of Vascular endothelial growth factor C (VEGFC) from Homo sapiens (Human).